The chain runs to 525 residues: ATP synthase subunit alpha (525 aa).

An ATP-binding site is contributed by 172–179 (GDRQTGKT).

Belongs to the ATPase alpha/beta chains family. F-type ATPases have 2 components, CF(1) - the catalytic core - and CF(0) - the membrane proton channel. CF(1) has five subunits: alpha(3), beta(3), gamma(1), delta(1), epsilon(1). CF(0) has three main subunits: a(1), b(2) and c(9-12). The alpha and beta chains form an alternating ring which encloses part of the gamma chain. CF(1) is attached to CF(0) by a central stalk formed by the gamma and epsilon chains, while a peripheral stalk is formed by the delta and b chains.

It is found in the cell inner membrane. The catalysed reaction is ATP + H2O + 4 H(+)(in) = ADP + phosphate + 5 H(+)(out). In terms of biological role, produces ATP from ADP in the presence of a proton gradient across the membrane. The alpha chain is a regulatory subunit. This chain is ATP synthase subunit alpha, found in Parabacteroides distasonis (strain ATCC 8503 / DSM 20701 / CIP 104284 / JCM 5825 / NCTC 11152).